We begin with the raw amino-acid sequence, 185 residues long: Threonylcarbamoyl-AMP synthase (185 aa).

The region spanning 4-185 is the YrdC-like domain; the sequence is SWRVQQAAQN…IATGQVMRAG (182 aa).

Belongs to the SUA5 family. TsaC subfamily.

It is found in the cytoplasm. It catalyses the reaction L-threonine + hydrogencarbonate + ATP = L-threonylcarbamoyladenylate + diphosphate + H2O. In terms of biological role, required for the formation of a threonylcarbamoyl group on adenosine at position 37 (t(6)A37) in tRNAs that read codons beginning with adenine. Catalyzes the conversion of L-threonine, HCO(3)(-)/CO(2) and ATP to give threonylcarbamoyl-AMP (TC-AMP) as the acyladenylate intermediate, with the release of diphosphate. This is Threonylcarbamoyl-AMP synthase from Pseudomonas syringae pv. tomato (strain ATCC BAA-871 / DC3000).